The following is a 156-amino-acid chain: MSKKVTDTVQEMAQPIVDSLQLELVDIEFVKEGQSWFLRVFIDSDDGVDIEECAKVSEALSEKLDEADPISQNYFLEVSSPGAERPLKKKADFEKSLGKNVYIKTYEPIDGVKVFEGELAEFDGQTVTVEITIKTRKKRINIPYEKIANARLAVTF.

The protein belongs to the RimP family.

Its subcellular location is the cytoplasm. Its function is as follows. Required for maturation of 30S ribosomal subunits. This chain is Ribosome maturation factor RimP, found in Bacillus subtilis (strain 168).